Reading from the N-terminus, the 320-residue chain is Acetaldehyde dehydrogenase 2 (320 aa).

C129 serves as the catalytic Acyl-thioester intermediate. Residues 160–168 (SAGPGTRAN) and N287 each bind NAD(+).

Belongs to the acetaldehyde dehydrogenase family.

It carries out the reaction acetaldehyde + NAD(+) + CoA = acetyl-CoA + NADH + H(+). The chain is Acetaldehyde dehydrogenase 2 from Burkholderia cenocepacia (strain ATCC BAA-245 / DSM 16553 / LMG 16656 / NCTC 13227 / J2315 / CF5610) (Burkholderia cepacia (strain J2315)).